The chain runs to 381 residues: DNA primase DnaG (381 aa).

The region spanning 173 to 259 (DAILVVEGRS…EVEDLEKDEI (87 aa)) is the Toprim domain. Positions 179, 221, and 223 each coordinate Mg(2+).

It belongs to the archaeal DnaG primase family. In terms of assembly, forms a ternary complex with MCM helicase and DNA. Component of the archaeal exosome complex. Requires Mg(2+) as cofactor.

The enzyme catalyses ssDNA + n NTP = ssDNA/pppN(pN)n-1 hybrid + (n-1) diphosphate.. Functionally, RNA polymerase that catalyzes the synthesis of short RNA molecules used as primers for DNA polymerase during DNA replication. Also part of the exosome, which is a complex involved in RNA degradation. Acts as a poly(A)-binding protein that enhances the interaction between heteromeric, adenine-rich transcripts and the exosome. In Methanothermobacter thermautotrophicus (strain ATCC 29096 / DSM 1053 / JCM 10044 / NBRC 100330 / Delta H) (Methanobacterium thermoautotrophicum), this protein is DNA primase DnaG.